Reading from the N-terminus, the 218-residue chain is Ribose-5-phosphate isomerase A (218 aa).

Substrate is bound by residues 28 to 31, 81 to 84, and 94 to 97; these read TGST, DGAD, and KGGG. The active-site Proton acceptor is the Glu103. Residue Lys121 participates in substrate binding.

This sequence belongs to the ribose 5-phosphate isomerase family. Homodimer.

It catalyses the reaction aldehydo-D-ribose 5-phosphate = D-ribulose 5-phosphate. It participates in carbohydrate degradation; pentose phosphate pathway; D-ribose 5-phosphate from D-ribulose 5-phosphate (non-oxidative stage): step 1/1. Its function is as follows. Catalyzes the reversible conversion of ribose-5-phosphate to ribulose 5-phosphate. In Yersinia pseudotuberculosis serotype IB (strain PB1/+), this protein is Ribose-5-phosphate isomerase A.